The following is a 528-amino-acid chain: Tyrosine--tRNA ligase, cytoplasmic (528 aa).

Met-1 bears the N-acetylmethionine mark. N-acetylglycine; in Tyrosine--tRNA ligase, cytoplasmic, N-terminally processed is present on Gly-2. Tyr-39 is an L-tyrosine binding site. Residue Tyr-39 coordinates trans-resveratrol. Positions 44-52 match the 'HIGH' region motif; it reads TTGKPHVAY. 4 residues coordinate L-tyrosine: Tyr-166, Gln-170, Asp-173, and Gln-188. Gln-170 and Asp-173 together coordinate trans-resveratrol. Lys-197 is subject to N6-acetyllysine. Residue Ser-205 is modified to Phosphoserine. At Lys-206 the chain carries N6-acetyllysine. A 'KMSKS' region motif is present at residues 222–226; it reads KMSSS. Positions 242–247 match the Nuclear localization signal motif; it reads KKKLKK. Residues 339–363 are disordered; the sequence is AAYPDPSKQKPTAKGPAKSSEPEEI. The region spanning 364-468 is the tRNA-binding domain; sequence IPSRLDIRVG…AGSAPGERVF (105 aa). Ser-386 is subject to Phosphoserine. Lys-474, Lys-482, and Lys-490 each carry N6-acetyllysine.

The protein belongs to the class-I aminoacyl-tRNA synthetase family. In terms of assembly, homodimer. Interacts (when binding to resveratrol) with PARP1; interaction stimulates the poly-ADP-ribosyltransferase activity of PARP1.

The protein localises to the cytoplasm. The protein resides in the nucleus. It carries out the reaction tRNA(Tyr) + L-tyrosine + ATP = L-tyrosyl-tRNA(Tyr) + AMP + diphosphate + H(+). Resveratrol strongly inhibits the tyrosine--tRNA ligase activity. Tyrosine--tRNA ligase that catalyzes the attachment of tyrosine to tRNA(Tyr) in a two-step reaction: tyrosine is first activated by ATP to form Tyr-AMP and then transferred to the acceptor end of tRNA(Tyr). Also acts as a positive regulator of poly-ADP-ribosylation in the nucleus, independently of its tyrosine--tRNA ligase activity. Activity is switched upon resveratrol-binding: resveratrol strongly inhibits the tyrosine--tRNA ligase activity and promotes relocalization to the nucleus, where YARS1 specifically stimulates the poly-ADP-ribosyltransferase activity of PARP1. This chain is Tyrosine--tRNA ligase, cytoplasmic (Yars1), found in Rattus norvegicus (Rat).